Here is a 336-residue protein sequence, read N- to C-terminus: Tetraacyldisaccharide 4'-kinase (336 aa).

60 to 67 contributes to the ATP binding site; the sequence is TAGGNGKT.

It belongs to the LpxK family.

The enzyme catalyses a lipid A disaccharide + ATP = a lipid IVA + ADP + H(+). Its pathway is glycolipid biosynthesis; lipid IV(A) biosynthesis; lipid IV(A) from (3R)-3-hydroxytetradecanoyl-[acyl-carrier-protein] and UDP-N-acetyl-alpha-D-glucosamine: step 6/6. Transfers the gamma-phosphate of ATP to the 4'-position of a tetraacyldisaccharide 1-phosphate intermediate (termed DS-1-P) to form tetraacyldisaccharide 1,4'-bis-phosphate (lipid IVA). This is Tetraacyldisaccharide 4'-kinase from Vibrio cholerae serotype O1 (strain ATCC 39315 / El Tor Inaba N16961).